Reading from the N-terminus, the 97-residue chain is Co-chaperonin GroES (97 aa).

It belongs to the GroES chaperonin family. As to quaternary structure, heptamer of 7 subunits arranged in a ring. Interacts with the chaperonin GroEL.

The protein resides in the cytoplasm. Functionally, together with the chaperonin GroEL, plays an essential role in assisting protein folding. The GroEL-GroES system forms a nano-cage that allows encapsulation of the non-native substrate proteins and provides a physical environment optimized to promote and accelerate protein folding. GroES binds to the apical surface of the GroEL ring, thereby capping the opening of the GroEL channel. This is Co-chaperonin GroES from Yersinia pseudotuberculosis serotype O:1b (strain IP 31758).